The primary structure comprises 433 residues: Serine--tRNA ligase (433 aa).

236 to 238 (TAE) lines the L-serine pocket. Position 267 to 269 (267 to 269 (RSE)) interacts with ATP. L-serine is bound at residue glutamate 290. 354 to 357 (EISS) serves as a coordination point for ATP. Residue serine 394 coordinates L-serine.

It belongs to the class-II aminoacyl-tRNA synthetase family. Type-1 seryl-tRNA synthetase subfamily. In terms of assembly, homodimer. The tRNA molecule binds across the dimer.

Its subcellular location is the cytoplasm. The catalysed reaction is tRNA(Ser) + L-serine + ATP = L-seryl-tRNA(Ser) + AMP + diphosphate + H(+). It catalyses the reaction tRNA(Sec) + L-serine + ATP = L-seryl-tRNA(Sec) + AMP + diphosphate + H(+). It participates in aminoacyl-tRNA biosynthesis; selenocysteinyl-tRNA(Sec) biosynthesis; L-seryl-tRNA(Sec) from L-serine and tRNA(Sec): step 1/1. Functionally, catalyzes the attachment of serine to tRNA(Ser). Is also able to aminoacylate tRNA(Sec) with serine, to form the misacylated tRNA L-seryl-tRNA(Sec), which will be further converted into selenocysteinyl-tRNA(Sec). In Acidiphilium cryptum (strain JF-5), this protein is Serine--tRNA ligase.